We begin with the raw amino-acid sequence, 176 residues long: Retinol-binding protein 4-A (176 aa).

S1 is subject to N-acetylserine. Disulfide bonds link C3–C159, C69–C173, and C119–C128. Q97 is a binding site for substrate.

It belongs to the calycin superfamily. Lipocalin family.

The protein localises to the secreted. Functionally, RBP delivers retinol from the liver stores to the peripheral tissues. In plasma, the RBP-retinol complex interacts with transthyretin, this prevents its loss by filtration through the kidney glomeruli. The sequence is that of Retinol-binding protein 4-A (rbp4a) from Oncorhynchus mykiss (Rainbow trout).